A 66-amino-acid chain; its full sequence is Putative alpha-neurotoxin RjAa13 (66 aa).

Residues 1–60 (KEGYPVDWGNCKYECMSDAYCKDLCVDRKAKSGYCYKLNWSCYCEGLPDDSPIKTNGHCR) enclose the LCN-type CS-alpha/beta domain. 4 disulfide bridges follow: C11–C59, C15–C35, C21–C42, and C25–C44.

It belongs to the long (4 C-C) scorpion toxin superfamily. Sodium channel inhibitor family. Alpha subfamily. In terms of tissue distribution, expressed by the venom gland.

The protein localises to the secreted. Functionally, alpha toxins bind voltage-independently at site-3 of sodium channels (Nav) and inhibits the inactivation of the activated channels, thereby blocking neuronal transmission. The sequence is that of Putative alpha-neurotoxin RjAa13 from Rhopalurus junceus (Caribbean blue scorpion).